Consider the following 151-residue polypeptide: Probable cGMP 3',5'-cyclic phosphodiesterase subunit delta (151 aa).

It belongs to the PDE6D/unc-119 family. Interacts with Pde6.

The protein localises to the nucleus. The protein resides in the cytoplasm. The protein is Probable cGMP 3',5'-cyclic phosphodiesterase subunit delta of Drosophila grimshawi (Hawaiian fruit fly).